Consider the following 443-residue polypeptide: Glucose-6-phosphate isomerase (443 aa).

Glu-285 (proton donor) is an active-site residue. Active-site residues include His-306 and Lys-420.

This sequence belongs to the GPI family.

Its subcellular location is the cytoplasm. The catalysed reaction is alpha-D-glucose 6-phosphate = beta-D-fructose 6-phosphate. The protein operates within carbohydrate biosynthesis; gluconeogenesis. It participates in carbohydrate degradation; glycolysis; D-glyceraldehyde 3-phosphate and glycerone phosphate from D-glucose: step 2/4. Its function is as follows. Catalyzes the reversible isomerization of glucose-6-phosphate to fructose-6-phosphate. In Staphylococcus haemolyticus (strain JCSC1435), this protein is Glucose-6-phosphate isomerase.